The sequence spans 508 residues: Probable cytochrome P450 6d5 (508 aa).

Position 453 (Cys-453) interacts with heme.

Belongs to the cytochrome P450 family. The cofactor is heme.

The protein resides in the endoplasmic reticulum membrane. The protein localises to the microsome membrane. Functionally, may be involved in the metabolism of insect hormones and in the breakdown of synthetic insecticides. This is Probable cytochrome P450 6d5 (Cyp6d5) from Drosophila melanogaster (Fruit fly).